Here is a 542-residue protein sequence, read N- to C-terminus: Chaperonin GroEL (542 aa).

ATP-binding positions include 29 to 32, 86 to 90, Gly-413, and Asp-494; these read TLGP and DGTTT.

It belongs to the chaperonin (HSP60) family. Forms a cylinder of 14 subunits composed of two heptameric rings stacked back-to-back. Interacts with the co-chaperonin GroES.

The protein localises to the cytoplasm. The catalysed reaction is ATP + H2O + a folded polypeptide = ADP + phosphate + an unfolded polypeptide.. Its function is as follows. Together with its co-chaperonin GroES, plays an essential role in assisting protein folding. The GroEL-GroES system forms a nano-cage that allows encapsulation of the non-native substrate proteins and provides a physical environment optimized to promote and accelerate protein folding. This is Chaperonin GroEL from Endomicrobium trichonymphae.